The primary structure comprises 206 residues: Small ribosomal subunit protein uS4 (206 aa).

A disordered region spans residues 18–46 (NIWGRPKSPVNRREYGPGQHGQRRKQKMS). An S4 RNA-binding domain is found at 94 to 154 (RRLDAVVYRA…EKSRQMAALL (61 aa)).

The protein belongs to the universal ribosomal protein uS4 family. In terms of assembly, part of the 30S ribosomal subunit. Contacts protein S5. The interaction surface between S4 and S5 is involved in control of translational fidelity.

One of the primary rRNA binding proteins, it binds directly to 16S rRNA where it nucleates assembly of the body of the 30S subunit. In terms of biological role, with S5 and S12 plays an important role in translational accuracy. This chain is Small ribosomal subunit protein uS4, found in Dinoroseobacter shibae (strain DSM 16493 / NCIMB 14021 / DFL 12).